The primary structure comprises 398 residues: uncharacterized protein (398 aa).

The disordered stretch occupies residues 313–398 (KTIKSSGSKT…TSKSIKYYEV (86 aa)). Composition is skewed to low complexity over residues 314–333 (TIKSSGSKTSKSIGSKTNKS) and 343–398 (GSKT…YYEV).

This is an uncharacterized protein from Acanthamoeba polyphaga mimivirus (APMV).